A 102-amino-acid polypeptide reads, in one-letter code: Small ribosomal subunit protein eS24 (102 aa).

The protein belongs to the eukaryotic ribosomal protein eS24 family.

The sequence is that of Small ribosomal subunit protein eS24 from Methanococcus maripaludis (strain DSM 14266 / JCM 13030 / NBRC 101832 / S2 / LL).